The chain runs to 98 residues: NADH-ubiquinone oxidoreductase chain 4L (98 aa).

Helical transmembrane passes span 2–22 (PPIF…TLIF), 29–49 (SLLC…LIIL), and 61–81 (ILLL…LVMV).

This sequence belongs to the complex I subunit 4L family. Core subunit of respiratory chain NADH dehydrogenase (Complex I) which is composed of 45 different subunits.

Its subcellular location is the mitochondrion inner membrane. It carries out the reaction a ubiquinone + NADH + 5 H(+)(in) = a ubiquinol + NAD(+) + 4 H(+)(out). Its function is as follows. Core subunit of the mitochondrial membrane respiratory chain NADH dehydrogenase (Complex I) which catalyzes electron transfer from NADH through the respiratory chain, using ubiquinone as an electron acceptor. Part of the enzyme membrane arm which is embedded in the lipid bilayer and involved in proton translocation. The protein is NADH-ubiquinone oxidoreductase chain 4L (MT-ND4L) of Avahi occidentalis (Western woolly lemur).